The primary structure comprises 251 residues: GTP cyclohydrolase FolE2 (251 aa).

This sequence belongs to the GTP cyclohydrolase IV family.

The catalysed reaction is GTP + H2O = 7,8-dihydroneopterin 3'-triphosphate + formate + H(+). It participates in cofactor biosynthesis; 7,8-dihydroneopterin triphosphate biosynthesis; 7,8-dihydroneopterin triphosphate from GTP: step 1/1. Converts GTP to 7,8-dihydroneopterin triphosphate. In Desulfotalea psychrophila (strain LSv54 / DSM 12343), this protein is GTP cyclohydrolase FolE2.